Reading from the N-terminus, the 509-residue chain is Heat shock 70 kDa protein 14-A (509 aa).

The protein belongs to the heat shock protein 70 family. In terms of assembly, component of ribosome-associated complex (RAC).

Its subcellular location is the cytoplasm. It localises to the cytosol. Functionally, component of the ribosome-associated complex (RAC), a complex involved in folding or maintaining nascent polypeptides in a folding-competent state. The protein is Heat shock 70 kDa protein 14-A (hspa14-a) of Xenopus laevis (African clawed frog).